We begin with the raw amino-acid sequence, 536 residues long: G-protein coupled receptor Mth2 (536 aa).

Residues 1 to 210 (MAERDHYHTI…DDNSTVKIIN (210 aa)) are Extracellular-facing. Cystine bridges form between Cys-17–Cys-71, Cys-73–Cys-78, Cys-82–Cys-177, Cys-83–Cys-96, and Cys-138–Cys-197. 2 N-linked (GlcNAc...) asparagine glycosylation sites follow: Asn-24 and Asn-33. N-linked (GlcNAc...) asparagine glycans are attached at residues Asn-103, Asn-113, Asn-118, Asn-159, Asn-184, and Asn-203. A helical transmembrane segment spans residues 211–231 (AYAMMFSIPFMMLTIAVYLLI). Over 232 to 241 (PELRNQHGKS) the chain is Cytoplasmic. The chain crosses the membrane as a helical span at residues 242 to 262 (LVCYLVGLTVGYTSLCYVQLY). Over 263-273 (QVDATGDACKV) the chain is Extracellular. The helical transmembrane segment at 274–294 (FGYTAYFFFMGAYMWLSVISF) threads the bilayer. The Cytoplasmic portion of the chain corresponds to 295–314 (DLWHNFRGTRGINRFQEKKR). Residues 315–335 (FLFYSLYSWGIAVVFLAFTYI) traverse the membrane as a helical segment. The Extracellular portion of the chain corresponds to 336-365 (AQELTNLPAYLKPGIGDGVYCWLDMSNWAA). The chain crosses the membrane as a helical span at residues 366 to 386 (MIYFYGPILVIVVANTIMFIM). Over 387-417 (TAIKIHGVQREMARIIASENSTKNLRTEKDK) the chain is Cytoplasmic. Residues 418-438 (FGLFLRLFLIMGITWLTELIS) traverse the membrane as a helical segment. Residues 439 to 449 (YFVGSDKGWSK) lie on the Extracellular side of the membrane. A helical transmembrane segment spans residues 450–470 (LFYISDLANAMQGFLIFMLFV). Topologically, residues 471 to 536 (MKKKVKHLIT…VDPQKTTIFR (66 aa)) are cytoplasmic. The disordered stretch occupies residues 487–506 (RDGSNQRQSQYSTKTTSSSV). The span at 492–505 (QRQSQYSTKTTSSS) shows a compositional bias: low complexity.

It belongs to the G-protein coupled receptor 2 family. Mth subfamily. Homodimer.

The protein localises to the cell membrane. Its function is as follows. Involved in biological aging and stress response. Essential for adult survival. The sequence is that of G-protein coupled receptor Mth2 (mth2) from Drosophila yakuba (Fruit fly).